The primary structure comprises 278 residues: Ferredoxin--NADP reductase A (278 aa).

The FAD-binding FR-type domain occupies 3-103 (PGYTEETVLE…KRATGTLTIG (101 aa)). FAD-binding positions include 52–55 (RAYS) and T118.

This sequence belongs to the ferredoxin--NADP reductase type 1 family. It depends on FAD as a cofactor.

The catalysed reaction is 2 reduced [4Fe-4S]-[ferredoxin] + NADP(+) + H(+) = 2 oxidized [4Fe-4S]-[ferredoxin] + NADPH. Its function is as follows. Transports electrons between NADPH and ferredoxin. Can transfer electrons to ferredoxins Fdx2 and Fdx8. Prefers NADPH to NADH. The sequence is that of Ferredoxin--NADP reductase A from Sorangium cellulosum (strain So ce56) (Polyangium cellulosum (strain So ce56)).